The primary structure comprises 131 residues: Large ribosomal subunit protein bL12 (131 aa).

Belongs to the bacterial ribosomal protein bL12 family. As to quaternary structure, homodimer. Part of the ribosomal stalk of the 50S ribosomal subunit. Forms a multimeric L10(L12)X complex, where L10 forms an elongated spine to which 2 to 4 L12 dimers bind in a sequential fashion. Binds GTP-bound translation factors.

Functionally, forms part of the ribosomal stalk which helps the ribosome interact with GTP-bound translation factors. Is thus essential for accurate translation. This Tropheryma whipplei (strain Twist) (Whipple's bacillus) protein is Large ribosomal subunit protein bL12.